The following is a 1418-amino-acid chain: JmjC domain-containing histone demethylation protein 1 (1418 aa).

Disordered regions lie at residues 1-86, 102-162, and 308-329; these read MIGA…SSST, APLS…STFD, and GADRASLDVPPRGDDDTESDEN. Over residues 44 to 60 the composition is skewed to basic and acidic residues; the sequence is WIDRGDSQAASYDRDRV. Residues 61–71 are compositionally biased toward polar residues; it reads TSNNDVYSSTN. Basic and acidic residues predominate over residues 127–139; the sequence is STERPAKRPRSEK. A compositionally biased stretch (polar residues) spans 143-162; that stretch reads PLHQPQTTVAPDANPSSTFD. Basic and acidic residues predominate over residues 308-321; that stretch reads GADRASLDVPPRGD. A PHD-type zinc finger spans residues 331 to 391; the sequence is QANCAACNLV…KFICRRCRPI (61 aa). Residues 588–746 form the JmjC domain; that stretch reads VSQSKLGKLI…MQIKVAKIEK (159 aa). Position 639 (Thr-639) interacts with substrate. Fe cation contacts are provided by His-642 and Asp-644. Lys-659 serves as a coordination point for substrate. His-714 contacts Fe cation. Disordered stretches follow at residues 891–964, 1090–1118, 1130–1195, and 1250–1394; these read PQWT…TVEI, NAATSKVHDGSPEGLNTGKKGRSKACDDC, YGRI…HTQR, and KPTA…DEPD. The span at 907–925 shows a compositional bias: basic and acidic residues; sequence LTEKKPAGRPSRRSERNAE. Basic and acidic residues-rich tracts occupy residues 1130-1143 and 1186-1195; these read YGRIDPIKAQERSK and AEGDMSHTQR. Residues 1250–1263 show a composition bias toward polar residues; the sequence is KPTASLVSPPTSQA. The span at 1341–1352 shows a compositional bias: low complexity; sequence SSKKPASRPSSS.

This sequence belongs to the JHDM1 histone demethylase family. It depends on Fe(2+) as a cofactor.

It localises to the nucleus. The enzyme catalyses N(6),N(6)-dimethyl-L-lysyl(36)-[histone H3] + 2 2-oxoglutarate + 2 O2 = L-lysyl(36)-[histone H3] + 2 formaldehyde + 2 succinate + 2 CO2. In terms of biological role, histone demethylase that specifically demethylates 'Lys-36' of histone H3, thereby playing a central role in histone code. The protein is JmjC domain-containing histone demethylation protein 1 (jhd1) of Aspergillus fumigatus (strain ATCC MYA-4609 / CBS 101355 / FGSC A1100 / Af293) (Neosartorya fumigata).